The following is a 313-amino-acid chain: Porphobilinogen deaminase (313 aa).

Cys-242 carries the post-translational modification S-(dipyrrolylmethanemethyl)cysteine.

This sequence belongs to the HMBS family. As to quaternary structure, monomer. The cofactor is dipyrromethane.

The catalysed reaction is 4 porphobilinogen + H2O = hydroxymethylbilane + 4 NH4(+). The protein operates within porphyrin-containing compound metabolism; protoporphyrin-IX biosynthesis; coproporphyrinogen-III from 5-aminolevulinate: step 2/4. In terms of biological role, tetrapolymerization of the monopyrrole PBG into the hydroxymethylbilane pre-uroporphyrinogen in several discrete steps. The polypeptide is Porphobilinogen deaminase (Escherichia fergusonii (strain ATCC 35469 / DSM 13698 / CCUG 18766 / IAM 14443 / JCM 21226 / LMG 7866 / NBRC 102419 / NCTC 12128 / CDC 0568-73)).